The chain runs to 303 residues: 3-methyl-2-oxobutanoate hydroxymethyltransferase (303 aa).

The segment covering 1 to 10 (MDSSGTVRNQ) has biased composition (polar residues). The interval 1–41 (MDSSGTVRNQTSDDHSRPADAAGTAATLYGAPAETRSPRRS) is disordered. The Mg(2+) site is built by Asp-84 and Asp-123. 3-methyl-2-oxobutanoate contacts are provided by residues 84 to 85 (DS), Asp-123, and Lys-153. Glu-155 lines the Mg(2+) pocket. Glu-221 serves as the catalytic Proton acceptor.

This sequence belongs to the PanB family. Homodecamer; pentamer of dimers. Mg(2+) serves as cofactor.

The protein resides in the cytoplasm. The catalysed reaction is 3-methyl-2-oxobutanoate + (6R)-5,10-methylene-5,6,7,8-tetrahydrofolate + H2O = 2-dehydropantoate + (6S)-5,6,7,8-tetrahydrofolate. Its pathway is cofactor biosynthesis; (R)-pantothenate biosynthesis; (R)-pantoate from 3-methyl-2-oxobutanoate: step 1/2. Functionally, catalyzes the reversible reaction in which hydroxymethyl group from 5,10-methylenetetrahydrofolate is transferred onto alpha-ketoisovalerate to form ketopantoate. In Frankia alni (strain DSM 45986 / CECT 9034 / ACN14a), this protein is 3-methyl-2-oxobutanoate hydroxymethyltransferase.